Consider the following 110-residue polypeptide: UPF0060 membrane protein Bcep1808_1236 (110 aa).

A run of 3 helical transmembrane segments spans residues 9–29, 34–54, and 66–86; these read ALFA…WLVL, PVWL…LLTL, and YGGV…GVAL.

This sequence belongs to the UPF0060 family.

The protein localises to the cell inner membrane. In Burkholderia vietnamiensis (strain G4 / LMG 22486) (Burkholderia cepacia (strain R1808)), this protein is UPF0060 membrane protein Bcep1808_1236.